A 123-amino-acid polypeptide reads, in one-letter code: Ribosome-binding factor A (123 aa).

The protein belongs to the RbfA family. Monomer. Binds 30S ribosomal subunits, but not 50S ribosomal subunits or 70S ribosomes.

It is found in the cytoplasm. In terms of biological role, one of several proteins that assist in the late maturation steps of the functional core of the 30S ribosomal subunit. Associates with free 30S ribosomal subunits (but not with 30S subunits that are part of 70S ribosomes or polysomes). Required for efficient processing of 16S rRNA. May interact with the 5'-terminal helix region of 16S rRNA. In Ralstonia pickettii (strain 12J), this protein is Ribosome-binding factor A.